Consider the following 292-residue polypeptide: Ribosomal protein L11 methyltransferase (292 aa).

Residues threonine 136, glycine 159, aspartate 181, and asparagine 228 each coordinate S-adenosyl-L-methionine.

This sequence belongs to the methyltransferase superfamily. PrmA family.

It is found in the cytoplasm. It carries out the reaction L-lysyl-[protein] + 3 S-adenosyl-L-methionine = N(6),N(6),N(6)-trimethyl-L-lysyl-[protein] + 3 S-adenosyl-L-homocysteine + 3 H(+). Functionally, methylates ribosomal protein L11. This Rhizobium johnstonii (strain DSM 114642 / LMG 32736 / 3841) (Rhizobium leguminosarum bv. viciae) protein is Ribosomal protein L11 methyltransferase.